We begin with the raw amino-acid sequence, 300 residues long: 5'-adenylylsulfate reductase-like 5 (300 aa).

The N-terminal stretch at 1 to 23 (MDSRVSILFVCAIAVSCFTSGSA) is a signal peptide. Positions 41-161 (FDLEAKCPPS…LIEFYEEATG (121 aa)) constitute a Thioredoxin domain. An N-linked (GlcNAc...) asparagine glycan is attached at Asn136. A helical membrane pass occupies residues 202-222 (FLVLSLLFICLQMAILVFPIA).

Its subcellular location is the membrane. In Arabidopsis thaliana (Mouse-ear cress), this protein is 5'-adenylylsulfate reductase-like 5 (APRL5).